The primary structure comprises 761 residues: Zinc finger protein 711 (761 aa).

Glycyl lysine isopeptide (Lys-Gly) (interchain with G-Cter in SUMO2) cross-links involve residues K224, K235, and K296. C2H2-type zinc fingers lie at residues 383–408 (YPCHICTKKFKSRGFLKRHMKNHPDH), 414–436 (YQCTDCDFTTNKKVSFHNHLESH), 476–499 (HKCKYCDYETAEQGLLNRHLLAVH), 505–527 (HVCVECGKGFRHPSELKKHMRTH), and 533–556 (YQCQYCAFRCADQSNLKTHIKSKH). Residues 562–584 (YKCEHCPQAFGDERELQRHLDLF) form a C2H2-type 6; atypical zinc finger. Zn(2+)-binding residues include C564, C567, and H580. 6 C2H2-type zinc fingers span residues 590–613 (HQCPHCDHKSTNSSDLKRHIISVH), 619–641 (HKCEVCDKGFHRPSELKKHSDIH), 647–670 (HQCRHCDFKTSDPFILSGHILSVH), 676–698 (LKCKRCKRGFRQQNELKKHMKTH), 704–727 (YQCEYCEYSTTDASGFKRHVISIH), and 733–755 (HRCEFCKKGFRRPSEKKQHIMRH).

The protein belongs to the krueppel C2H2-type zinc-finger protein family. As to quaternary structure, interacts with PHF8.

Its subcellular location is the nucleus. Transcription regulator required for brain development. Probably acts as a transcription factor that binds to the promoter of target genes and recruits PHF8 histone demethylase, leading to activated expression of genes involved in neuron development, such as KDM5C. May compete with transcription factor ARX for activation of expression of KDM5C. The sequence is that of Zinc finger protein 711 (Znf711) from Mus musculus (Mouse).